The following is a 156-amino-acid chain: Ribosome maturation factor RimP (156 aa).

This sequence belongs to the RimP family.

It is found in the cytoplasm. Functionally, required for maturation of 30S ribosomal subunits. The protein is Ribosome maturation factor RimP of Lachnospira eligens (strain ATCC 27750 / DSM 3376 / VPI C15-48 / C15-B4) (Eubacterium eligens).